Consider the following 398-residue polypeptide: Succinate--CoA ligase [ADP-forming] subunit beta (398 aa).

The ATP-grasp domain maps to 9 to 254 (KRLLHEYGAP…ISEEDPKEIE (246 aa)). ATP-binding positions include Lys46, 53–55 (GRG), Glu109, Ala112, and Glu117. Mg(2+) is bound by residues Asn209 and Asp223. Residues Asn274 and 331-333 (GIM) each bind substrate.

This sequence belongs to the succinate/malate CoA ligase beta subunit family. In terms of assembly, heterotetramer of two alpha and two beta subunits. The cofactor is Mg(2+).

It catalyses the reaction succinate + ATP + CoA = succinyl-CoA + ADP + phosphate. The catalysed reaction is GTP + succinate + CoA = succinyl-CoA + GDP + phosphate. Its pathway is carbohydrate metabolism; tricarboxylic acid cycle; succinate from succinyl-CoA (ligase route): step 1/1. Succinyl-CoA synthetase functions in the citric acid cycle (TCA), coupling the hydrolysis of succinyl-CoA to the synthesis of either ATP or GTP and thus represents the only step of substrate-level phosphorylation in the TCA. The beta subunit provides nucleotide specificity of the enzyme and binds the substrate succinate, while the binding sites for coenzyme A and phosphate are found in the alpha subunit. This Bartonella bacilliformis (strain ATCC 35685 / KC583 / Herrer 020/F12,63) protein is Succinate--CoA ligase [ADP-forming] subunit beta.